We begin with the raw amino-acid sequence, 1593 residues long: DNA-directed RNA polymerase subunit beta' (1593 aa).

The Zn(2+) site is built by cysteine 74, cysteine 76, cysteine 89, and cysteine 92. Aspartate 648, aspartate 650, and aspartate 652 together coordinate Mg(2+). Residues cysteine 1026, cysteine 1100, cysteine 1107, and cysteine 1110 each contribute to the Zn(2+) site.

It belongs to the RNA polymerase beta' chain family. As to quaternary structure, the RNAP catalytic core consists of 2 alpha, 1 beta, 1 beta' and 1 omega subunit. When a sigma factor is associated with the core the holoenzyme is formed, which can initiate transcription. Requires Mg(2+) as cofactor. Zn(2+) is required as a cofactor.

The catalysed reaction is RNA(n) + a ribonucleoside 5'-triphosphate = RNA(n+1) + diphosphate. In terms of biological role, DNA-dependent RNA polymerase catalyzes the transcription of DNA into RNA using the four ribonucleoside triphosphates as substrates. The polypeptide is DNA-directed RNA polymerase subunit beta' (Endomicrobium trichonymphae).